Consider the following 213-residue polypeptide: Protein GrpE (213 aa).

The tract at residues 1 to 61 is disordered; the sequence is MEQGEKQVME…AEKAPTAEEL (61 aa). The segment covering 13-35 has biased composition (acidic residues); that stretch reads TYDEPEREQPIEEEAAPQPEEES.

The protein belongs to the GrpE family. Homodimer.

It localises to the cytoplasm. Participates actively in the response to hyperosmotic and heat shock by preventing the aggregation of stress-denatured proteins, in association with DnaK and GrpE. It is the nucleotide exchange factor for DnaK and may function as a thermosensor. Unfolded proteins bind initially to DnaJ; upon interaction with the DnaJ-bound protein, DnaK hydrolyzes its bound ATP, resulting in the formation of a stable complex. GrpE releases ADP from DnaK; ATP binding to DnaK triggers the release of the substrate protein, thus completing the reaction cycle. Several rounds of ATP-dependent interactions between DnaJ, DnaK and GrpE are required for fully efficient folding. The protein is Protein GrpE of Geobacillus kaustophilus (strain HTA426).